The sequence spans 327 residues: MKNIAILCSGGDVSGMNAALKRFVEYAFDQGLTPFFVENGYEGLIDNKISKADYSDVAGIISIGGTKIRTSRSERFKEISYRQIALENLRGHGIDGLIVLGGDGSFKGMQKLSDECNDIGFIGIPSTIDNDIAGTQYCLGVDTALNAIRVAIDSIRDTASSFGRAFVIEVMGRECGYLALVSALTSGAEMCLIPEVPYNLEVYKEEFLEEKEQGRTYFIAVVSEALKNTEQIVRWFEEEIDIESRMTVLGHIQRGGIPTVHDRLMAFHFVTSAIDALREGTKSKVVCYDDGMFICKDIKDVAFKKYMIDEDLLALGREFESPQHKQV.

ATP contacts are provided by residues G11, 72–73 (RS), and 102–105 (GDGS). Mg(2+) is bound at residue D103. 127–129 (TID) contributes to the substrate binding site. The active-site Proton acceptor is the D129. R156 contributes to the ADP binding site. Substrate is bound by residues R164 and 171 to 173 (MGR). 187–189 (GAE) is a binding site for ADP. Substrate is bound by residues E224, R245, and 251-254 (HIQR).

It belongs to the phosphofructokinase type A (PFKA) family. ATP-dependent PFK group I subfamily. Prokaryotic clade 'B1' sub-subfamily. As to quaternary structure, homotetramer. Requires Mg(2+) as cofactor.

Its subcellular location is the cytoplasm. The enzyme catalyses beta-D-fructose 6-phosphate + ATP = beta-D-fructose 1,6-bisphosphate + ADP + H(+). It functions in the pathway carbohydrate degradation; glycolysis; D-glyceraldehyde 3-phosphate and glycerone phosphate from D-glucose: step 3/4. Allosterically activated by ADP and other diphosphonucleosides, and allosterically inhibited by phosphoenolpyruvate. Its function is as follows. Catalyzes the phosphorylation of D-fructose 6-phosphate to fructose 1,6-bisphosphate by ATP, the first committing step of glycolysis. The protein is ATP-dependent 6-phosphofructokinase of Sulfurovum sp. (strain NBC37-1).